Here is a 98-residue protein sequence, read N- to C-terminus: MSMVYINIFLAFIMSLMGLLMYRSHLMSSLLCLEGMMLSLFIMMTMVVLNNHFTLASMTPIILLVFAACEAALGLSLLVMVSNTYGTDYVQNLNLLQC.

A run of 3 helical transmembrane segments spans residues 1–21 (MSMVYINIFLAFIMSLMGLLM), 29–49 (SLLCLEGMMLSLFIMMTMVVL), and 61–81 (IILLVFAACEAALGLSLLVMV).

Belongs to the complex I subunit 4L family. Core subunit of respiratory chain NADH dehydrogenase (Complex I) which is composed of 45 different subunits.

The protein localises to the mitochondrion inner membrane. It carries out the reaction a ubiquinone + NADH + 5 H(+)(in) = a ubiquinol + NAD(+) + 4 H(+)(out). Core subunit of the mitochondrial membrane respiratory chain NADH dehydrogenase (Complex I) which catalyzes electron transfer from NADH through the respiratory chain, using ubiquinone as an electron acceptor. Part of the enzyme membrane arm which is embedded in the lipid bilayer and involved in proton translocation. The polypeptide is NADH-ubiquinone oxidoreductase chain 4L (MT-ND4L) (Acinonyx jubatus (Cheetah)).